We begin with the raw amino-acid sequence, 101 residues long: Aspartyl/glutamyl-tRNA(Asn/Gln) amidotransferase subunit C (101 aa).

This sequence belongs to the GatC family. As to quaternary structure, heterotrimer of A, B and C subunits.

The catalysed reaction is L-glutamyl-tRNA(Gln) + L-glutamine + ATP + H2O = L-glutaminyl-tRNA(Gln) + L-glutamate + ADP + phosphate + H(+). It carries out the reaction L-aspartyl-tRNA(Asn) + L-glutamine + ATP + H2O = L-asparaginyl-tRNA(Asn) + L-glutamate + ADP + phosphate + 2 H(+). Its function is as follows. Allows the formation of correctly charged Asn-tRNA(Asn) or Gln-tRNA(Gln) through the transamidation of misacylated Asp-tRNA(Asn) or Glu-tRNA(Gln) in organisms which lack either or both of asparaginyl-tRNA or glutaminyl-tRNA synthetases. The reaction takes place in the presence of glutamine and ATP through an activated phospho-Asp-tRNA(Asn) or phospho-Glu-tRNA(Gln). This Salinispora tropica (strain ATCC BAA-916 / DSM 44818 / JCM 13857 / NBRC 105044 / CNB-440) protein is Aspartyl/glutamyl-tRNA(Asn/Gln) amidotransferase subunit C.